The primary structure comprises 168 residues: Large ribosomal subunit protein bL9 (168 aa).

The disordered stretch occupies residues 148 to 168; it reads ENGEGSVQPAAEAAEVASTEA. Residues 157 to 168 are compositionally biased toward low complexity; sequence AAEAAEVASTEA.

It belongs to the bacterial ribosomal protein bL9 family.

In terms of biological role, binds to the 23S rRNA. This is Large ribosomal subunit protein bL9 from Herpetosiphon aurantiacus (strain ATCC 23779 / DSM 785 / 114-95).